Reading from the N-terminus, the 399-residue chain is F-box/kelch-repeat protein At5g48980 (399 aa).

Positions 1-11 are enriched in polar residues; sequence MADSQRLSTAS. Residues 1–29 are disordered; the sequence is MADSQRLSTASGVKDGQPPWKKKKLSNDT. One can recognise an F-box domain in the interval 29 to 75; sequence TTSNPSLPYDVILIILARVSRSYYTNLSLVSKSFRSILTSPELYKTR. The stretch at 199-248 is one Kelch repeat; it reads IVYLPGSFESPDSLNCVEVYNTMTQTWKPVPPEKRMFKLENLEKKIYYKS.

The polypeptide is F-box/kelch-repeat protein At5g48980 (Arabidopsis thaliana (Mouse-ear cress)).